We begin with the raw amino-acid sequence, 512 residues long: Serine--tRNA ligase, cytoplasmic (512 aa).

Met1 is modified (N-acetylmethionine). Residues 9–61 are interaction with tRNA; the sequence is RVDKGGDPALIRETQEKRFKDPGLVDQLVKADSEWRRCRFRADNLNKLKNLCS. Ser241 bears the Phosphoserine mark. 2 residues coordinate L-serine: Thr271 and Arg302. Residues 302-304 and 318-321 each bind ATP; these read RQE and VHQF. N6-acetyllysine is present on Lys323. L-serine is bound at residue Glu325. 391–394 serves as a coordination point for ATP; the sequence is ELVS. Position 427 (Asn427) interacts with L-serine. A disordered region spans residues 472–512; the sequence is KPAPIDQEPSKKQKKQHEGSKKKAKEVTLENQLQNMEVTEA. Basic and acidic residues predominate over residues 479-499; the sequence is EPSKKQKKQHEGSKKKAKEVT. The short motif at 482–494 is the Nuclear localization signal element; that stretch reads KKQKKQHEGSKKK. Positions 500 to 512 are enriched in polar residues; the sequence is LENQLQNMEVTEA.

It belongs to the class-II aminoacyl-tRNA synthetase family. Type-1 seryl-tRNA synthetase subfamily. Homodimer. The tRNA molecule may bind across the dimer. Interacts with SIRT2. Interacts with METTL6; interaction is required for the tRNA N(3)-methylcytidine methyltransferase activity of METTL6.

It localises to the cytoplasm. The protein localises to the nucleus. It carries out the reaction tRNA(Ser) + L-serine + ATP = L-seryl-tRNA(Ser) + AMP + diphosphate + H(+). The catalysed reaction is tRNA(Sec) + L-serine + ATP = L-seryl-tRNA(Sec) + AMP + diphosphate + H(+). Its pathway is aminoacyl-tRNA biosynthesis; selenocysteinyl-tRNA(Sec) biosynthesis; L-seryl-tRNA(Sec) from L-serine and tRNA(Sec): step 1/1. In terms of biological role, catalyzes the attachment of serine to tRNA(Ser) in a two-step reaction: serine is first activated by ATP to form Ser-AMP and then transferred to the acceptor end of tRNA(Ser). Is probably also able to aminoacylate tRNA(Sec) with serine, to form the misacylated tRNA L-seryl-tRNA(Sec), which will be further converted into selenocysteinyl-tRNA(Sec). In the nucleus, binds to the VEGFA core promoter and prevents MYC binding and transcriptional activation by MYC. Recruits SIRT2 to the VEGFA promoter, promoting deacetylation of histone H4 at 'Lys-16' (H4K16). Thereby, inhibits the production of VEGFA and sprouting angiogenesis mediated by VEGFA. The sequence is that of Serine--tRNA ligase, cytoplasmic (Sars1) from Rattus norvegicus (Rat).